The chain runs to 205 residues: Urease accessory protein UreG (205 aa).

Residue 14–21 (GPVGSGKT) participates in GTP binding.

Homodimer. UreD, UreF and UreG form a complex that acts as a GTP-hydrolysis-dependent molecular chaperone, activating the urease apoprotein by helping to assemble the nickel containing metallocenter of UreC. The UreE protein probably delivers the nickel.

Its subcellular location is the cytoplasm. Its activity is regulated as follows. Activation of apourease within the UreDFG-apoprotein complex is inhibited by zinc, copper and cobalt. Functionally, facilitates the functional incorporation of the urease nickel metallocenter. This process requires GTP hydrolysis, probably effectuated by UreG. In Klebsiella aerogenes (Enterobacter aerogenes), this protein is Urease accessory protein UreG.